Consider the following 1033-residue polypeptide: Collagen alpha-2(I) chain (1033 aa).

The interval 1–1033 (SGGFDFSFLP…FGYEGDFYRA (1033 aa)) is disordered. Low complexity-rich tracts occupy residues 25 to 71 (LGPG…ARGP), 154 to 175 (SRGS…SAGP), and 221 to 242 (PGAN…AGAP). The span at 276 to 285 (GESGGKGEPG) shows a compositional bias: gly residues. Residues 286-296 (SAGPQGPPGSS) are compositionally biased toward low complexity. The segment covering 318-327 (GLRGGPGSRG) has biased composition (gly residues). Low complexity-rich tracts occupy residues 340–356 (PAGA…RGPS) and 391–410 (LPGI…RGEA). The span at 459–468 (GVQGGKGEQG) shows a compositional bias: gly residues. Composition is skewed to low complexity over residues 519-528 (PSGAIGSRGP) and 540-550 (EPGVVGAPGTA). The segment covering 551-560 (GPAGSGGLPG) has biased composition (gly residues). 2 stretches are compositionally biased toward low complexity: residues 583–627 (VGTT…PRGS) and 634–654 (VGPA…QPGA). A compositionally biased stretch (basic and acidic residues) spans 655 to 664 (KGERGTKGPK). Residues 672 to 682 (PTGPVGSAGPA) show a composition bias toward low complexity. Residues 692-701 (GSRGDGGPPG) show a composition bias toward gly residues. Over residues 703–712 (TGFPGAAGRT) the composition is skewed to low complexity. The span at 749–758 (GETGAGGPPG) shows a compositional bias: gly residues. 2 stretches are compositionally biased toward low complexity: residues 766–793 (SGEP…LGLP) and 801–811 (LPGVAGAVGEP). Over residues 812–834 (GPLGIGPPGARGPSGGVGPGVNG) the composition is skewed to gly residues. Over residues 873 to 909 (AAGAPGPHGAVGPAGKHGNRGEPGPVGSAGPVGALGP) the composition is skewed to low complexity. Positions 919–930 (RGDKGEAGDKGP) are enriched in basic and acidic residues. Pro residues predominate over residues 1003 to 1015 (SGPPGPPGPPGPP).

The protein belongs to the fibrillar collagen family. In terms of assembly, trimers of one alpha 2(I) and two alpha 1(I) chains. Interacts (via C-terminus) with TMEM131 (via PapD-L domain); the interaction is direct and is involved in assembly and TRAPPIII ER-to-Golgi transport complex-dependent secretion of collagen. Post-translationally, prolines at the third position of the tripeptide repeating unit (G-X-Y) are hydroxylated in some or all of the chains. As to expression, expressed in bone.

The protein resides in the secreted. Its subcellular location is the extracellular space. It localises to the extracellular matrix. Functionally, type I collagen is a member of group I collagen (fibrillar forming collagen). The sequence is that of Collagen alpha-2(I) chain from Mylodon darwinii (Giant ground sloth).